We begin with the raw amino-acid sequence, 187 residues long: Elongation factor P (187 aa).

This sequence belongs to the elongation factor P family.

Its subcellular location is the cytoplasm. It functions in the pathway protein biosynthesis; polypeptide chain elongation. Involved in peptide bond synthesis. Stimulates efficient translation and peptide-bond synthesis on native or reconstituted 70S ribosomes in vitro. Probably functions indirectly by altering the affinity of the ribosome for aminoacyl-tRNA, thus increasing their reactivity as acceptors for peptidyl transferase. This chain is Elongation factor P, found in Acidothermus cellulolyticus (strain ATCC 43068 / DSM 8971 / 11B).